The following is a 445-amino-acid chain: 3-phosphoshikimate 1-carboxyvinyltransferase (445 aa).

The interval Met1–Pro25 is disordered. 3-phosphoshikimate-binding residues include Lys28, Ser29, and Arg33. A phosphoenolpyruvate-binding site is contributed by Lys28. Residues Gly101 and Arg129 each contribute to the phosphoenolpyruvate site. Residues Ser175, Gln177, Asp328, and Lys355 each coordinate 3-phosphoshikimate. Gln177 serves as a coordination point for phosphoenolpyruvate. Asp328 acts as the Proton acceptor in catalysis. Phosphoenolpyruvate-binding residues include Arg359 and Arg402.

This sequence belongs to the EPSP synthase family. Monomer.

The protein localises to the cytoplasm. It catalyses the reaction 3-phosphoshikimate + phosphoenolpyruvate = 5-O-(1-carboxyvinyl)-3-phosphoshikimate + phosphate. The protein operates within metabolic intermediate biosynthesis; chorismate biosynthesis; chorismate from D-erythrose 4-phosphate and phosphoenolpyruvate: step 6/7. In terms of biological role, catalyzes the transfer of the enolpyruvyl moiety of phosphoenolpyruvate (PEP) to the 5-hydroxyl of shikimate-3-phosphate (S3P) to produce enolpyruvyl shikimate-3-phosphate and inorganic phosphate. This is 3-phosphoshikimate 1-carboxyvinyltransferase from Rhodopseudomonas palustris (strain TIE-1).